We begin with the raw amino-acid sequence, 198 residues long: Outer-membrane lipoprotein carrier protein (198 aa).

Residues 1–17 form the signal peptide; that stretch reads MKKILLSLCFLSSVAFA.

This sequence belongs to the LolA family. Monomer.

It is found in the periplasm. Functionally, participates in the translocation of lipoproteins from the inner membrane to the outer membrane. Only forms a complex with a lipoprotein if the residue after the N-terminal Cys is not an aspartate (The Asp acts as a targeting signal to indicate that the lipoprotein should stay in the inner membrane). The sequence is that of Outer-membrane lipoprotein carrier protein from Aliivibrio salmonicida (strain LFI1238) (Vibrio salmonicida (strain LFI1238)).